The following is a 361-amino-acid chain: Dynein axonemal assembly factor 8 (361 aa).

Disordered regions lie at residues 65–191 and 309–334; these read DPAG…ERRK and AQPG…RRPL. Residues 136–157 show a composition bias toward polar residues; the sequence is TLNTSASQSPRQGPQGEATRSP. Residues Ser142 and Ser144 each carry the phosphoserine modification. A compositionally biased stretch (low complexity) spans 321 to 334; that stretch reads GSSSSSGHLGRRPL.

The protein localises to the dynein axonemal particle. The protein resides in the cytoplasm. In cyliated cells, dynein axonemal particle-specific protein required for deployment of ODA to the axoneme. Interacts with outer dynein arm (ODA) subunits. In Bos taurus (Bovine), this protein is Dynein axonemal assembly factor 8 (DNAAF8).